The following is a 381-amino-acid chain: uncharacterized protein (381 aa).

The segment covering Met331–Arg340 has biased composition (polar residues). Positions Met331 to Met381 are disordered. Residues His342 to Ser354 show a composition bias toward basic and acidic residues. Over residues Asp372–Met381 the composition is skewed to basic residues.

Its subcellular location is the cytoplasm. The protein localises to the nucleus. This is an uncharacterized protein from Saccharomyces cerevisiae (strain ATCC 204508 / S288c) (Baker's yeast).